The following is a 341-amino-acid chain: NADH-quinone oxidoreductase subunit H 2 (341 aa).

8 helical membrane passes run 13-33 (IIVIGQSVLLLVLLLISIAYI), 82-102 (GVFLLAPLVTCVLALAAWAVI), 115-135 (VGVLYILAVSSLSVYGIIMAG), 161-181 (IGFVVICVLLCVGSLNLTAIV), 190-210 (MLGWYWLPLFPMFVVFYVSAL), 248-268 (YVAIVTMCAMGTILFLGGWLP), 277-297 (WVPGIVWFALKVLFMFFLFAM), and 317-337 (VFLPLSLAMVVIVAAVLQFAG).

Belongs to the complex I subunit 1 family. NDH-1 is composed of 14 different subunits. Subunits NuoA, H, J, K, L, M, N constitute the membrane sector of the complex.

Its subcellular location is the cell inner membrane. The enzyme catalyses a quinone + NADH + 5 H(+)(in) = a quinol + NAD(+) + 4 H(+)(out). NDH-1 shuttles electrons from NADH, via FMN and iron-sulfur (Fe-S) centers, to quinones in the respiratory chain. The immediate electron acceptor for the enzyme in this species is believed to be ubiquinone. Couples the redox reaction to proton translocation (for every two electrons transferred, four hydrogen ions are translocated across the cytoplasmic membrane), and thus conserves the redox energy in a proton gradient. This subunit may bind ubiquinone. The polypeptide is NADH-quinone oxidoreductase subunit H 2 (Rhodopseudomonas palustris (strain BisB5)).